Reading from the N-terminus, the 269-residue chain is Proline-rich protein 7 (269 aa).

Residues 1-9 (MVMSQGTYT) lie on the Extracellular side of the membrane. The tract at residues 1 to 44 (MVMSQGTYTFLTCFAGFWLIWGLIVLLCCFCSFLRRRLKRRQEE) is required for interaction with NMDA receptors. The interval 2–39 (VMSQGTYTFLTCFAGFWLIWGLIVLLCCFCSFLRRRLK) is required for membrane localization. A helical; Signal-anchor for type III membrane protein transmembrane segment spans residues 10 to 30 (FLTCFAGFWLIWGLIVLLCCF). Residues 31–269 (CSFLRRRLKR…IPLFGRTTAV (239 aa)) lie on the Cytoplasmic side of the membrane. A Phosphoserine modification is found at S64. 2 disordered regions span residues 64–83 (SLAG…RSRL) and 98–128 (LLHH…LSVP). Residues 108–117 (AHPHPHHHAL) show a composition bias toward basic residues. The span at 118-128 (PHPPPSHLSVP) shows a compositional bias: pro residues. The segment at 146-166 (PCYEEAVLMAEPPPPYSEVLT) is required for internalization. A required for apoptosis induction region spans residues 146-269 (PCYEEAVLMA…IPLFGRTTAV (124 aa)). Residues 267–269 (TAV) carry the PDZ-binding motif.

Forms a complex with NMDA receptor zeta subunit GRIN1 and epsilon subunit GRIN2B. Interacts with GRIN2B. Interacts with GRIN1; the interaction is reduced upon NMDA receptor activity. Found in a postsynaptic membrane complex with DLG4 and GRIN1. Interacts with DLG4 (via PDZ3 domain and to lesser degree via PDZ2 domain). Interacts with FBXW7. Found in a complex with JUN and FBXW7. Interacts with JUN and FBXW7; the interaction inhibits ubiquitination-mediated JUN degradation promoting its phosphorylation and transcriptional activity. Interacts with SRC. In terms of processing, palmitoylated. Tyrosine phosphorylated, possibly by SRC. As to expression, expressed in brain. Expressed in the cerebral cortex and especially in hippocampal neural cells (at protein level).

Its subcellular location is the cell membrane. It is found in the postsynaptic cell membrane. It localises to the postsynaptic density membrane. The protein localises to the cytoplasm. The protein resides in the perinuclear region. Its subcellular location is the synapse. It is found in the cell projection. It localises to the dendrite. The protein localises to the nucleus. In terms of biological role, acts as a synapse-to-nucleus messenger to promote NMDA receptor-mediated excitotoxicity in neurons in a JUN-dependent manner. Inhibits ubiquitination-mediated degradation and promotes phosphorylation and transcriptional activity of transcription factor JUN. Might play a redundant role in the regulation of T cell receptor signaling. Might promote apoptosis in T cells. The sequence is that of Proline-rich protein 7 (Prr7) from Rattus norvegicus (Rat).